The primary structure comprises 1757 residues: Serine/threonine-protein kinase WNK3 (1757 aa).

The disordered stretch occupies residues 1 to 25 (MATDSGEPASTEDSEKPDGVSFENR). A Phosphoserine modification is found at S62. Residues 66–82 (TEDDKVAESSRRDERKA) are compositionally biased toward basic and acidic residues. The segment at 66-85 (TEDDKVAESSRRDERKAATN) is disordered. The Protein kinase domain occupies 146–404 (LKFDIELGRG…IKDLLNHAFF (259 aa)). ATP is bound by residues 226–229 (TELM) and K276. The active-site Proton acceptor is D293. Residues S303 and S307 each carry the phosphoserine; by autocatalysis modification. Positions 536–546 (EYEETEVDQHV) are interaction with KLHL3. The residue at position 540 (T540) is a Phosphothreonine. Polar residues-rich tracts occupy residues 551–570 (LQGKPQQQSSSVRGDTSSEP), 578–604 (SDTSSHPTVAYSSNQTTSSQEQPKLTQ), and 674–689 (SVKENTNNPDTPSGNG). 2 disordered regions span residues 551 to 604 (LQGK…KLTQ) and 674 to 705 (SVKENTNNPDTPSGNGKQDRNKQRRASCPRPE). Position 1039 is a phosphoserine (S1039). Positions 1404-1422 (VATEKNVTSTTEVSVQSGS) are enriched in polar residues. Disordered stretches follow at residues 1404–1440 (VATEKNVTSTTEVSVQSGSEPLDKEKNESTPGKQTCT), 1479–1498 (SLFYSPSSPMSSDNESEIED), and 1536–1574 (ATKDNKAQSSEVPLSPASPRRPRSFKSKLRSRPQSMTHS). Low complexity predominate over residues 1479 to 1491 (SLFYSPSSPMSSD). S1550 and S1553 each carry phosphoserine. Residues 1555–1566 (RRPRSFKSKLRS) are compositionally biased toward basic residues. At S1595 the chain carries Phosphoserine. Disordered regions lie at residues 1621–1650 (HFPSKPSLNQLKQSQQKSEAENWNKSCEST) and 1734–1757 (PGMNLQSFPAPPVQNPASIPPGPK). Residues 1624 to 1637 (SKPSLNQLKQSQQK) show a composition bias toward low complexity. Positions 1641-1650 (ENWNKSCEST) are enriched in polar residues. The span at 1742 to 1757 (PAPPVQNPASIPPGPK) shows a compositional bias: pro residues.

The protein belongs to the protein kinase superfamily. Ser/Thr protein kinase family. WNK subfamily. As to quaternary structure, interacts with WNK1 and WNK4. It depends on Mg(2+) as a cofactor. Post-translationally, autophosphorylated at Ser-303 and Ser-307, promoting its activity. Phosphorylation at Thr-540 prevents interaction with KLHL3 and subsequent ubiquitination and degradation by the BCR(KLHL3) complex. Ubiquitinated by the BCR(KLHL2) complex, leading to its degradation. Ubiquitinated by the BCR(KLHL3) complex, leading to its degradation. As to expression, expressed in pancreatic duct.

The protein localises to the cytoplasm. It carries out the reaction L-seryl-[protein] + ATP = O-phospho-L-seryl-[protein] + ADP + H(+). It catalyses the reaction L-threonyl-[protein] + ATP = O-phospho-L-threonyl-[protein] + ADP + H(+). With respect to regulation, activated in response to hyperosmotic stress: cell shrinkage promotes formation of a membraneless compartment that concentrates WNK3 with its substrates, OXSR1/OSR1 and STK39/SPAK. Activation requires autophosphorylation of Ser-307 and, to a lower extent, Ser-303. Autophosphorylation and subsequent activation is inhibited by increases in intracellular ionic strength: Cl(-) potently inhibits WNK3 kinase activity via direct binding. Also inhibited by K(+) ions. Kinase activity is inhibited by WNK4. Its function is as follows. Serine/threonine-protein kinase component of the WNK3-SPAK/OSR1 kinase cascade, which plays an important role in the regulation of electrolyte homeostasis and regulatory volume increase in response to hyperosmotic stress. WNK3 mediates regulatory volume increase in response to hyperosmotic stress by acting as a molecular crowding sensor, which senses cell shrinkage and mediates formation of a membraneless compartment by undergoing liquid-liquid phase separation. The membraneless compartment concentrates WNK3 with its substrates, OXSR1/OSR1 and STK39/SPAK, promoting WNK3-dependent phosphorylation and activation of downstream kinases OXSR1/OSR1 and STK39/SPAK. Following activation, OXSR1/OSR1 and STK39/SPAK catalyze phosphorylation of ion cotransporters SLC12A1/NKCC2, SLC12A2/NKCC1, SLC12A3/NCC, SLC12A4/KCC1, SLC12A5/KCC2 or SLC12A6/KCC3, regulating their activity. Phosphorylation of Na-K-Cl cotransporters SLC12A2/NKCC1 and SLC12A2/NKCC1 promote their activation and ion influx; simultaneously, phosphorylation of K-Cl cotransporters SLC12A4/KCC1, SLC12A5/KCC2 and SLC12A6/KCC3 inhibits its activity, blocking ion efflux. Phosphorylates WNK4, possibly regulating the activity of SLC12A3/NCC. May also phosphorylate NEDD4L. Also acts as a scaffold protein independently of its protein kinase activity: negatively regulates cell membrane localization of various transporters and channels, such as KCNJ1 and SLC26A9. Increases Ca(2+) influx mediated by TRPV5 and TRPV6 by enhancing their membrane expression level via a kinase-dependent pathway. This chain is Serine/threonine-protein kinase WNK3, found in Mus musculus (Mouse).